The primary structure comprises 264 residues: Thymidylate synthase (264 aa).

Arg-21 is a binding site for dUMP. Residue His-51 coordinates (6R)-5,10-methylene-5,6,7,8-tetrahydrofolate. DUMP is bound at residue 126–127; the sequence is RR. The active-site Nucleophile is Cys-146. Residues 166 to 169, Asn-177, and 207 to 209 each bind dUMP; these read RSAD and HLY. Asp-169 lines the (6R)-5,10-methylene-5,6,7,8-tetrahydrofolate pocket. Residue Ala-263 participates in (6R)-5,10-methylene-5,6,7,8-tetrahydrofolate binding.

This sequence belongs to the thymidylate synthase family. Bacterial-type ThyA subfamily. Homodimer.

The protein localises to the cytoplasm. The catalysed reaction is dUMP + (6R)-5,10-methylene-5,6,7,8-tetrahydrofolate = 7,8-dihydrofolate + dTMP. It functions in the pathway pyrimidine metabolism; dTTP biosynthesis. Functionally, catalyzes the reductive methylation of 2'-deoxyuridine-5'-monophosphate (dUMP) to 2'-deoxythymidine-5'-monophosphate (dTMP) while utilizing 5,10-methylenetetrahydrofolate (mTHF) as the methyl donor and reductant in the reaction, yielding dihydrofolate (DHF) as a by-product. This enzymatic reaction provides an intracellular de novo source of dTMP, an essential precursor for DNA biosynthesis. The chain is Thymidylate synthase from Azotobacter vinelandii (strain DJ / ATCC BAA-1303).